Here is a 238-residue protein sequence, read N- to C-terminus: MIRKTLAASCAVLLMAGCNAARQQASPLPPVAPPQTYVEPEQAAANPGSMFNDAEADLMFSDSRARRVGDIVLVKIVENAKAKNKADTTSERDSTNNYTVGAYFGQDSASINPMNPVGAFGGKVGTNALLQTGSKSKLDGKGETKRENTVTATIAARVVRVMPGGLLQVEGARETRVNDETQYIVLSGLVRSRDVASDNSVMSTQLADSRIAYYGKGVLADKQRPGWFSRLMDNLWPF.

The first 17 residues, 1–17 (MIRKTLAASCAVLLMAG), serve as a signal peptide directing secretion. Cysteine 18 is lipidated: N-palmitoyl cysteine. Cysteine 18 is lipidated: S-diacylglycerol cysteine.

Belongs to the FlgH family. In terms of assembly, the basal body constitutes a major portion of the flagellar organelle and consists of four rings (L,P,S, and M) mounted on a central rod.

It localises to the cell outer membrane. Its subcellular location is the bacterial flagellum basal body. Its function is as follows. Assembles around the rod to form the L-ring and probably protects the motor/basal body from shearing forces during rotation. The protein is Flagellar L-ring protein of Nitratidesulfovibrio vulgaris (strain ATCC 29579 / DSM 644 / CCUG 34227 / NCIMB 8303 / VKM B-1760 / Hildenborough) (Desulfovibrio vulgaris).